Reading from the N-terminus, the 385-residue chain is NADH-quinone oxidoreductase subunit D 2 (385 aa).

The protein belongs to the complex I 49 kDa subunit family. NDH-1 is composed of 14 different subunits. Subunits NuoB, C, D, E, F, and G constitute the peripheral sector of the complex.

The protein resides in the cell membrane. It catalyses the reaction a quinone + NADH + 5 H(+)(in) = a quinol + NAD(+) + 4 H(+)(out). Functionally, NDH-1 shuttles electrons from NADH, via FMN and iron-sulfur (Fe-S) centers, to quinones in the respiratory chain. The immediate electron acceptor for the enzyme in this species is believed to be a menaquinone. Couples the redox reaction to proton translocation (for every two electrons transferred, four hydrogen ions are translocated across the cytoplasmic membrane), and thus conserves the redox energy in a proton gradient. This chain is NADH-quinone oxidoreductase subunit D 2, found in Salinispora arenicola (strain CNS-205).